A 101-amino-acid chain; its full sequence is DNA-binding protein HU (101 aa).

The protein belongs to the bacterial histone-like protein family. As to quaternary structure, homodimer.

Its function is as follows. Histone-like DNA-binding protein which is capable of wrapping DNA to stabilize it, and thus to prevent its denaturation under extreme environmental conditions. This is DNA-binding protein HU (hup) from Rickettsia bellii (strain RML369-C).